A 113-amino-acid chain; its full sequence is UPF0122 protein SSU98_0878 (113 aa).

This sequence belongs to the UPF0122 family.

Its function is as follows. Might take part in the signal recognition particle (SRP) pathway. This is inferred from the conservation of its genetic proximity to ftsY/ffh. May be a regulatory protein. The sequence is that of UPF0122 protein SSU98_0878 from Streptococcus suis (strain 98HAH33).